A 307-amino-acid polypeptide reads, in one-letter code: Homoserine kinase (307 aa).

92–102 (PLARGLGSSAT) provides a ligand contact to ATP.

It belongs to the GHMP kinase family. Homoserine kinase subfamily.

It localises to the cytoplasm. The enzyme catalyses L-homoserine + ATP = O-phospho-L-homoserine + ADP + H(+). It participates in amino-acid biosynthesis; L-threonine biosynthesis; L-threonine from L-aspartate: step 4/5. Its function is as follows. Catalyzes the ATP-dependent phosphorylation of L-homoserine to L-homoserine phosphate. In Microchaete diplosiphon (Fremyella diplosiphon), this protein is Homoserine kinase (thrB).